The primary structure comprises 291 residues: tRNA-cytidine(32) 2-sulfurtransferase (291 aa).

The PP-loop motif signature appears at 36-41 (SGGKDS). [4Fe-4S] cluster is bound by residues Cys-111, Cys-114, and Cys-202. Residues 259–291 (DPWLDAEDEEAEDCGEPSAGDGVVSLGGARGGR) form a disordered region. Positions 262 to 273 (LDAEDEEAEDCG) are enriched in acidic residues.

It belongs to the TtcA family. In terms of assembly, homodimer. Mg(2+) serves as cofactor. The cofactor is [4Fe-4S] cluster.

The protein resides in the cytoplasm. It catalyses the reaction cytidine(32) in tRNA + S-sulfanyl-L-cysteinyl-[cysteine desulfurase] + AH2 + ATP = 2-thiocytidine(32) in tRNA + L-cysteinyl-[cysteine desulfurase] + A + AMP + diphosphate + H(+). It functions in the pathway tRNA modification. Catalyzes the ATP-dependent 2-thiolation of cytidine in position 32 of tRNA, to form 2-thiocytidine (s(2)C32). The sulfur atoms are provided by the cysteine/cysteine desulfurase (IscS) system. This is tRNA-cytidine(32) 2-sulfurtransferase from Anaeromyxobacter sp. (strain K).